Reading from the N-terminus, the 488-residue chain is UDP-N-acetylmuramoyl-L-alanyl-D-glutamate--2,6-diaminopimelate ligase (488 aa).

UDP-N-acetyl-alpha-D-muramoyl-L-alanyl-D-glutamate-binding positions include leucine 24, serine 26, and 41–43 (HQV). 113–119 (GTNGKTT) is a binding site for ATP. Residues asparagine 154, 155-156 (TT), serine 182, glutamine 188, and arginine 190 contribute to the UDP-N-acetyl-alpha-D-muramoyl-L-alanyl-D-glutamate site. Lysine 222 carries the post-translational modification N6-carboxylysine. Residues arginine 386, 410–413 (DNPR), glycine 461, and glutamate 465 contribute to the meso-2,6-diaminopimelate site. The Meso-diaminopimelate recognition motif motif lies at 410–413 (DNPR).

Belongs to the MurCDEF family. MurE subfamily. Mg(2+) is required as a cofactor. Post-translationally, carboxylation is probably crucial for Mg(2+) binding and, consequently, for the gamma-phosphate positioning of ATP.

It is found in the cytoplasm. It catalyses the reaction UDP-N-acetyl-alpha-D-muramoyl-L-alanyl-D-glutamate + meso-2,6-diaminopimelate + ATP = UDP-N-acetyl-alpha-D-muramoyl-L-alanyl-gamma-D-glutamyl-meso-2,6-diaminopimelate + ADP + phosphate + H(+). It participates in cell wall biogenesis; peptidoglycan biosynthesis. Catalyzes the addition of meso-diaminopimelic acid to the nucleotide precursor UDP-N-acetylmuramoyl-L-alanyl-D-glutamate (UMAG) in the biosynthesis of bacterial cell-wall peptidoglycan. The sequence is that of UDP-N-acetylmuramoyl-L-alanyl-D-glutamate--2,6-diaminopimelate ligase from Haemophilus influenzae (strain PittGG).